Reading from the N-terminus, the 4377-residue chain is Ankyrin-3 (4377 aa).

Residues 1-44 (MAHAASQLKKNRDLEINAEEEPEKKRKHRKRSRDRKKKSDANAS) are disordered. Positions 25–38 (KRKHRKRSRDRKKK) are enriched in basic residues. S39 is subject to Phosphoserine. ANK repeat units lie at residues 73–102 (NGLN…NVDA), 106–135 (KGNT…NVNA), 139–168 (NGFT…SQSL), 172–201 (DGFT…KGKV), 203–230 (LPAL…NADV), 234–263 (SGFT…AVDF), 267–296 (NDIT…KIDA), 300–329 (DGLT…PILS), 333–362 (NGLS…PVDD), 366–395 (DYLT…NPNA), 399–428 (NGFT…SIQA), 432–461 (SGLT…SPNT), 465–494 (RGET…QVEA), 498–527 (DDQT…SPNA), 531–560 (SGYT…SLSI), 564–593 (KGFT…SPDA), 597–626 (SGLT…SPHA), 630–659 (NGYT…DANA), 663–692 (QGIA…NVNL), 696–725 (SGLT…HVDA), 729–758 (MGYT…KVNA), 762–791 (NGYT…SPNE), and 795–825 (NGNT…TMTT). T468 bears the Phosphoserine mark. Phosphoserine is present on S623. Phosphoserine occurs at positions 765 and 791. 9 positions are modified to phosphoserine: S847, S861, S867, S913, S916, S922, S957, S959, and S1113. ZU5 domains are found at residues 984–1139 (FLVS…VVSR) and 1141–1288 (KQES…LADC). The segment at 1273–1407 (VSFTTNVSAR…SIKIRDTSQE (135 aa)) is UPA domain. Phosphoserine occurs at positions 1445, 1459, and 1470. Over residues 1519 to 1539 (SGFTSLSSSSSNTPSASPLKS) the composition is skewed to low complexity. The interval 1519-1540 (SGFTSLSSSSSNTPSASPLKSI) is disordered. Residues S1622, S1625, S1632, I1651, L1658, S1984, S2111, S2123, and S2126 each carry the phosphoserine modification. Disordered stretches follow at residues 1968–1987 (VDNK…SPED), 2107–2159 (TILE…VPIP), 2176–2245 (YDPS…EETH), 2299–2322 (AVSP…DNQM), 2383–2433 (FPCS…ISDD), 2474–2508 (DVSH…KIAT), 2588–2751 (LTEV…VKKI), 2795–2824 (QSNE…MPDS), 3036–3067 (PPLE…DVFD), 3131–3272 (TFYT…KKHH), 3298–3516 (PVIR…SVFP), 3538–3607 (KGLD…HEGK), 3635–3718 (GEHT…DPKL), 3868–3897 (KATS…QSEK), and 4019–4090 (KKMQ…CERT). Residues 1977 to 1986 (PKSDKGHSPE) are compositionally biased toward basic and acidic residues. The span at 2115-2136 (FSQHDQDKSPLSDSGFETRSEK) shows a compositional bias: basic and acidic residues. The span at 2137 to 2146 (TPSAPQSAES) shows a compositional bias: polar residues. A compositionally biased stretch (basic and acidic residues) spans 2299-2308 (AVSPDVHKSA). The segment covering 2390-2399 (GQQEEEELTA) has biased composition (acidic residues). Residues 2407–2417 (LESSRVNTPVS) are compositionally biased toward polar residues. 2 stretches are compositionally biased toward basic and acidic residues: residues 2497-2508 (GSDKRSREKIAT) and 2588-2612 (LTEV…PEKK). The span at 2622–2631 (SSQSPTSSSP) shows a compositional bias: low complexity. Residues 2706–2716 (SGFQLKQSKLS) are compositionally biased toward polar residues. Positions 2720-2742 (LKFEQGTHAKSKDMSQEDRKSDG) are enriched in basic and acidic residues. Residues 2796–2807 (SNEIVVNDSGSD) show a composition bias toward polar residues. 2 stretches are compositionally biased toward polar residues: residues 3154–3186 (EQVS…SKTP) and 3214–3224 (KSTSLKQTTVE). Composition is skewed to basic and acidic residues over residues 3227-3242 (AVER…DSNQ) and 3335-3361 (KLKE…KELE). Polar residues predominate over residues 3377–3402 (SPQNEIAQNGNNDQSITECSIATTAE). Residues 3409–3428 (ATEIDSLDGYDLQDEDDGLT) are compositionally biased toward acidic residues. Basic and acidic residues-rich tracts occupy residues 3465-3481 (EVIE…DKPP) and 3549-3575 (RGDD…EDRS). Low complexity predominate over residues 3576 to 3598 (PATTPDTTPARTPTDESTPTSEP). The segment covering 3637–3651 (HTSEGKSGDQGEGDK) has biased composition (basic and acidic residues). Polar residues-rich tracts occupy residues 3654-3669 (VTAT…TVET), 3676-3713 (ETPT…NTSK), 3880-3897 (HMSN…QSEK), and 4033-4052 (SRNT…VTTK). The span at 4053-4076 (SARDKKTEAAPLKSKSEKAGSEKR) shows a compositional bias: basic and acidic residues. Positions 4090 to 4174 (TDIRMAIVAD…DIVTLLEGPI (85 aa)) constitute a Death domain. 2 positions are modified to phosphoserine: S4211 and S4229. Disordered regions lie at residues 4251-4298 (NGSH…EPAS) and 4323-4377 (PVSM…KSHS). A compositionally biased stretch (polar residues) spans 4268–4277 (PESQNDVGKQ). Phosphoserine is present on residues S4290 and S4298. Residues 4337–4347 (GKPRLSLHEEE) show a composition bias toward basic and acidic residues. Position 4350 is a phosphoserine (S4350). Basic residues predominate over residues 4362–4377 (VKTKKEIRHVEKKSHS).

In terms of assembly, directly interacts with DMD and betaDAG1. This interaction does not interfere with binding between DMD and betaDAG1. It is also required for DMD and betaDAG1 retention at costameres. Interacts (via N-terminal ANK repeats) with SCHIP1 isoform 5 (via C-terminus); this interaction is required for the localization at axon initial segments (AISs) and nodes of Ranvier (NRs). May be a constituent of a NFASC/NRCAM/ankyrin G complex. Interacts with RHBG. Interacts with PLEC and FLNC. Interacts with KCNA1; this inhibits channel activity. Interacts (via ANK repeats) with IQCJ-SCHIP1; required for IQCJ-SCHIP1 localization at axon initial segments (AIS) and nodes of Ranvier. Interacts with SCHIP1. Interacts with SCN5A. Interacts with PKP2 and GJA1/CX43. As to expression, expressed in brain, neurons, muscles and other tissues.

Its subcellular location is the cytoplasm. The protein localises to the cytoskeleton. The protein resides in the cell projection. It localises to the axon. It is found in the cell membrane. Its subcellular location is the sarcolemma. The protein localises to the postsynaptic cell membrane. The protein resides in the lysosome. It localises to the T-tubule. It is found in the golgi apparatus. Its function is as follows. Membrane-cytoskeleton linker. May participate in the maintenance/targeting of ion channels and cell adhesion molecules at the nodes of Ranvier and axonal initial segments. In skeletal muscle, required for costamere localization of DMD and betaDAG1. Regulates KCNA1 channel activity in function of dietary Mg(2+) levels, and thereby contributes to the regulation of renal Mg(2+) reabsorption. Required for intracellular adhesion and junctional conductance in myocytes, potentially via stabilization of GJA1/CX43 protein abundance and promotion of PKP2, GJA1/CX43, and SCN5A/Nav1.5 localization to cell-cell junctions. In terms of biological role, may be part of a Golgi-specific membrane cytoskeleton in association with beta-spectrin. This chain is Ankyrin-3, found in Homo sapiens (Human).